Consider the following 314-residue polypeptide: tRNA dimethylallyltransferase 2 (314 aa).

Gly-8–Ser-15 contributes to the ATP binding site. Residue Thr-10–Ser-15 participates in substrate binding.

The protein belongs to the IPP transferase family. As to quaternary structure, monomer. It depends on Mg(2+) as a cofactor.

The catalysed reaction is adenosine(37) in tRNA + dimethylallyl diphosphate = N(6)-dimethylallyladenosine(37) in tRNA + diphosphate. Functionally, catalyzes the transfer of a dimethylallyl group onto the adenine at position 37 in tRNAs that read codons beginning with uridine, leading to the formation of N6-(dimethylallyl)adenosine (i(6)A). The sequence is that of tRNA dimethylallyltransferase 2 from Mycobacterium marinum (strain ATCC BAA-535 / M).